The sequence spans 184 residues: Outer-membrane lipoprotein carrier protein (184 aa).

The first 19 residues, 1–19 (MRAFLKILMVLIFMSVAYA), serve as a signal peptide directing secretion.

This sequence belongs to the LolA family. As to quaternary structure, monomer.

It is found in the periplasm. Functionally, participates in the translocation of lipoproteins from the inner membrane to the outer membrane. Only forms a complex with a lipoprotein if the residue after the N-terminal Cys is not an aspartate (The Asp acts as a targeting signal to indicate that the lipoprotein should stay in the inner membrane). The protein is Outer-membrane lipoprotein carrier protein of Helicobacter pylori (strain HPAG1).